A 278-amino-acid polypeptide reads, in one-letter code: Trans-2,3-dihydro-3-hydroxyanthranilate isomerase (278 aa).

Residue Glu45 is part of the active site.

It belongs to the PhzF family.

It catalyses the reaction (5S,6S)-6-amino-5-hydroxycyclohexa-1,3-diene-1-carboxyate = (1R,6S)-6-amino-5-oxocyclohex-2-ene-1-carboxylate. It participates in secondary metabolite biosynthesis; pyocyanine biosynthesis. In terms of biological role, isomerase that catalyzes the condensation of two molecules of trans-2,3-dihydro-3-hydroxyanthranilic acid (DHHA) into the phenazine ring system. The final product is not yet known. This is Trans-2,3-dihydro-3-hydroxyanthranilate isomerase (phzF1) from Pseudomonas aeruginosa (strain ATCC 15692 / DSM 22644 / CIP 104116 / JCM 14847 / LMG 12228 / 1C / PRS 101 / PAO1).